The following is a 124-amino-acid chain: Fluoride-specific ion channel FluC (124 aa).

Helical transmembrane passes span L2–I22, T35–F55, T71–F91, and L100–L120. Na(+) is bound by residues G75 and T78.

It belongs to the fluoride channel Fluc/FEX (TC 1.A.43) family.

The protein localises to the cell inner membrane. The catalysed reaction is fluoride(in) = fluoride(out). Its activity is regulated as follows. Na(+) is not transported, but it plays an essential structural role and its presence is essential for fluoride channel function. In terms of biological role, fluoride-specific ion channel. Important for reducing fluoride concentration in the cell, thus reducing its toxicity. The polypeptide is Fluoride-specific ion channel FluC (Proteus mirabilis (strain HI4320)).